Here is a 214-residue protein sequence, read N- to C-terminus: ATP phosphoribosyltransferase (214 aa).

It belongs to the ATP phosphoribosyltransferase family. Short subfamily. In terms of assembly, heteromultimer composed of HisG and HisZ subunits.

It localises to the cytoplasm. It carries out the reaction 1-(5-phospho-beta-D-ribosyl)-ATP + diphosphate = 5-phospho-alpha-D-ribose 1-diphosphate + ATP. It functions in the pathway amino-acid biosynthesis; L-histidine biosynthesis; L-histidine from 5-phospho-alpha-D-ribose 1-diphosphate: step 1/9. Its function is as follows. Catalyzes the condensation of ATP and 5-phosphoribose 1-diphosphate to form N'-(5'-phosphoribosyl)-ATP (PR-ATP). Has a crucial role in the pathway because the rate of histidine biosynthesis seems to be controlled primarily by regulation of HisG enzymatic activity. In Aquifex aeolicus (strain VF5), this protein is ATP phosphoribosyltransferase (hisG).